A 588-amino-acid chain; its full sequence is Calicin (588 aa).

The 71-residue stretch at Trp28 to Glu98 folds into the BTB domain. The region spanning Cys133–Phe235 is the BACK domain. Ser149 is subject to Phosphoserine. Kelch repeat units lie at residues Ser280–Arg327, Tyr328–Gly375, Val377–Asp423, Asn425–Gln475, Asp476–Ser525, and Lys526–Leu580.

As to quaternary structure, interacts with CYLC1; the interaction may be relevant for proper acrosome attachment to the nuclear envelope. In terms of tissue distribution, expressed in testis and in spermatozoa.

Its subcellular location is the cytoplasm. The protein resides in the cytoskeleton. It is found in the perinuclear theca. The protein localises to the calyx. Required for both nuclear and acrosomal shaping during spermiogenesis. The chain is Calicin (Ccin) from Mus musculus (Mouse).